Reading from the N-terminus, the 1941-residue chain is MMDMSELGESACYLRQGYQEMMKVHTVPWDGKKRVWVPDEQDAYVEAEVKTEATGGKVTVETKDQKVLTVRETEMQPMNPPRFDLLEDMAMMTHLNEAAVLHNLRQRYARWMIYTYSGLFCVTINPYKWLPVYTAAVVAAYKGKRRSEAPPHIYAVADNAYNDMLRNRENQSMLITGESGAGKTVNTKRVIQYFAIVAALGDGPGKKAQFLATKTGGTLEDQIIEANPAMEAFGNAKTLRNDNSSRFGKFIRIHFGPTGKLASADIDSYLLEKSRVIFQLPGERGYHVYYQILSGKKPELQDMLLLSMNPYDYHFCSQGVTTVDNMDDGEELIATDHAMDILGFSVDEKCACYKIVGALLHFGNMKFKQKQREEQAEADGTESADKAAYLMGVSSGDLLKGLLHPRVRVGNEYVTKGQSVEQVVFAVGALAKATYDRLFRWLVSRINQTLDTKLPRQFFIGVLDIAGFEIFEFNSFEQLCINFTNEKLQQFFNQHMFVLEQEEYKREGIDWVFIDFGLDLQPCIDLIEKPLGILSILEEECMFPKASDASFRAKLYDNHSGKSPNFQQPRPDKKRKYQAHFEVVHYAGVVPYSIVGWLEKNKDPLNETVVPIFQKSQNRLLATLYENYAGSCSTEPPKSGVKEKRKKAASFQTVSQLHKENLNKLMTNLRATQPHFVRCIVPNENKTPGVMDSFLVLHQLRCNGVLEGIRICRQGFPNRLLYADFRQRYRILNPSAIPDDTFVDSRKATEKLLGSLDIDHTQYQFGHTKVFFKAGLLGILEELRDQRLAKVLTLLQARSRGRLMRLEYQRMLGGRDALFTIQWNIRAFNAVKNWSWMKLFFKMKPLLRSAQAEEELAALRAELRGLRGALATAEAKRQELEETQVSVTQEKNDLALQLQAEQDNLADAEERCHLLIKSKVQLEAKVKELSERLEDEEEVNADLAARRRKLEDECTELKKDIDDLELTLAKAEKEKQATENKVKNLTEEMAALDEAVVRLTKEKKALQEAHQQALGDLQAEEDRVSALAKAKIRLEQQVEDLECSLEQEKKLRMDTERAKRKLEGDLKLTQETVTDTTQDKQQLEEKLKKKDSELSQLNLRVEDEQLVGVQLQKKIKELQARAEELEEELEAERAARARVEKQRAEAARELEELSERLEEAGGASAGQREGCRKREAELGRLRRELEEAVLRHEATVAALRRKQADSAAELSEQVDSLQRIRQKLEKEKSELRMEVDDLGASVETLARGKASAEKLCRTYEDQLSEAKIKVEELQRQLADASTQRGRLQTENGELGRLLEEKESMISQLSRGKTSAAQSLEELRRQLEEESKAKGALAHAVQALRHDCDLLREQHEEESEAQAELQRLLSKANAEVAQWRSKYEADAIQRTEELEEAKKKLALRLQEAEEGVEAANAKCSSLEKAKLRLQTESEDVTLELERATSAAAALDKKQRHLERALEERRRQEEEMQRELEAAQREARGLGTELFRLRHSHEEALEALETLKRENKNLQEEISDLTDQVSLSGKSIQELEKAKKALEGEKSELQAALEEAEGALELEETKTLRIQLELSQVKAEVDRKLAEKDEECTNLRRNHQRAVESLQASLDAETRARNEALRLKKKMEGDLNDLELQLGHATRQAMEAQAATRLLQAQLKEEQAGRDEEQRLAAELREQGQALERRAALLAAELEELRAALEQGERSRRLAEQELLEATERLNLLHSQNTGLLNQKKKLEVDLAQLSGEVEEAAQERREAEEKAKKAITDAAMMAEELKKEQDTSAHLERMKKTLEQTVRELQARLEEAEQAALRGGKKQVQKLEAKVRELEAELDAEQKKHAEALKGVRKHERRVKELVYQTEEDRKNLARMQDLVDKLQSKVKSYKRQFEEAEQQASTNLAKYRKAQHELDDAEERADMAETQANKLRARSRDALGPKHKE.

One can recognise a Myosin N-terminal SH3-like domain in the interval 30-80 (DGKKRVWVPDEQDAYVEAEVKTEATGGKVTVETKDQKVLTVRETEMQPMNP). The 702-residue stretch at 84–785 (DLLEDMAMMT…LLGILEELRD (702 aa)) folds into the Myosin motor domain. 177–184 (GESGAGKT) is an ATP binding site. Actin-binding regions lie at residues 662–684 (LNKL…VPNE) and 764–778 (QFGH…GLLG). An IQ domain is found at 788–817 (LAKVLTLLQARSRGRLMRLEYQRMLGGRDA). A coiled-coil region spans residues 846-1935 (LLRSAQAEEE…KLRARSRDAL (1090 aa)). Residues 1887–1941 (RQFEEAEQQASTNLAKYRKAQHELDDAEERADMAETQANKLRARSRDALGPKHKE) are disordered. Residues 1930 to 1941 (RSRDALGPKHKE) show a composition bias toward basic and acidic residues.

It belongs to the TRAFAC class myosin-kinesin ATPase superfamily. Myosin family. In terms of assembly, muscle myosin is a hexameric protein that consists of 2 heavy chain subunits (MHC), 2 alkali light chain subunits (MLC) and 2 regulatory light chain subunits (MLC-2).

It is found in the membrane. Involved in muscle contraction. This is Myosin-7B (Myh7b) from Mus musculus (Mouse).